Here is a 187-residue protein sequence, read N- to C-terminus: Putative lipoprotein LppJ (187 aa).

An N-terminal signal peptide occupies residues methionine 1–glycine 28. Cysteine 29 is lipidated: N-palmitoyl cysteine. Cysteine 29 carries the S-diacylglycerol cysteine lipid modification.

It is found in the cell membrane. The chain is Putative lipoprotein LppJ (lppJ) from Mycobacterium tuberculosis (strain CDC 1551 / Oshkosh).